We begin with the raw amino-acid sequence, 43 residues long: uncharacterized protein (43 aa).

A helical membrane pass occupies residues 21–41 (SSFALIVVLFILLIIVGAAIF).

The protein belongs to the SscA family.

Its subcellular location is the membrane. This is an uncharacterized protein from Bacillus subtilis (strain 168).